A 320-amino-acid chain; its full sequence is Lipoyl synthase (320 aa).

Positions 67, 72, 78, 93, 97, 100, and 307 each coordinate [4Fe-4S] cluster. A Radical SAM core domain is found at 79–296 (FNHGTATFMI…REKAAEMGFE (218 aa)).

Belongs to the radical SAM superfamily. Lipoyl synthase family. Requires [4Fe-4S] cluster as cofactor.

Its subcellular location is the cytoplasm. The catalysed reaction is [[Fe-S] cluster scaffold protein carrying a second [4Fe-4S](2+) cluster] + N(6)-octanoyl-L-lysyl-[protein] + 2 oxidized [2Fe-2S]-[ferredoxin] + 2 S-adenosyl-L-methionine + 4 H(+) = [[Fe-S] cluster scaffold protein] + N(6)-[(R)-dihydrolipoyl]-L-lysyl-[protein] + 4 Fe(3+) + 2 hydrogen sulfide + 2 5'-deoxyadenosine + 2 L-methionine + 2 reduced [2Fe-2S]-[ferredoxin]. It participates in protein modification; protein lipoylation via endogenous pathway; protein N(6)-(lipoyl)lysine from octanoyl-[acyl-carrier-protein]: step 2/2. Its function is as follows. Catalyzes the radical-mediated insertion of two sulfur atoms into the C-6 and C-8 positions of the octanoyl moiety bound to the lipoyl domains of lipoate-dependent enzymes, thereby converting the octanoylated domains into lipoylated derivatives. The chain is Lipoyl synthase from Actinobacillus succinogenes (strain ATCC 55618 / DSM 22257 / CCUG 43843 / 130Z).